Reading from the N-terminus, the 331-residue chain is Nodulation protein D 2 (331 aa).

One can recognise an HTH lysR-type domain in the interval 6–63; that stretch reads LDLNLLVALDALMTERSLTAAARKINLSQPAMSAAVARLRSYFRDELFAMRGRKLVPT. The H-T-H motif DNA-binding region spans 23 to 42; it reads LTAAARKINLSQPAMSAAVA.

The protein belongs to the LysR transcriptional regulatory family.

Its function is as follows. NodD regulates the expression of the nodABCFE genes which encode other nodulation proteins. NodD is also a negative regulator of its own expression. Binds flavonoids as inducers. The protein is Nodulation protein D 2 (nodD2) of Bradyrhizobium elkanii.